A 533-amino-acid polypeptide reads, in one-letter code: Early growth response protein 1 (533 aa).

2 disordered regions span residues 1-94 (MAAA…EQPY) and 161-237 (MTNP…PPPA). A compositionally biased stretch (gly residues) spans 68 to 77 (SGGGGGGGSN). Low complexity predominate over residues 164–189 (PPTSSSSAPSPAASSSSSASQSPPLS). Lysine 303 participates in a covalent cross-link: Glycyl lysine isopeptide (Lys-Gly) (interchain with G-Cter in SUMO2). Positions 316–336 (PSRMRKYPNRPSKTPPHERPY) are disordered. 3 consecutive C2H2-type zinc fingers follow at residues 336–360 (YACPVESCDRRFSRSDELTRHIRIH), 366–388 (FQCRICMRNFSRSDHLTTHIRTH), and 394–416 (FACDICGRKFARSDERKRHTKIH). Positions 407-478 (DERKRHTKIH…SSTYPSPAHS (72 aa)) are disordered. A compositionally biased stretch (basic residues) spans 411-421 (RHTKIHLRQKD). A compositionally biased stretch (low complexity) spans 427-475 (SVVASPAASSLSSYPSPVATSYPSPATTSFPSPVPTSYSSPGSSTYPSP).

The protein belongs to the EGR C2H2-type zinc-finger protein family. In terms of assembly, interacts with SNAI1 and SP1 upon 12-O-tetradecanoylphorbol-13-acetate (TPA) induction. As to expression, detected in lung vasculature and in mononuclear phagocytes. Detected in liver (at protein level). Expressed in the liver in a circadian manner.

It is found in the nucleus. It localises to the cytoplasm. Transcriptional regulator. Recognizes and binds to the DNA sequence 5'-GCG(T/G)GGGCG-3'(EGR-site) in the promoter region of target genes. Binds double-stranded target DNA, irrespective of the cytosine methylation status. Regulates the transcription of numerous target genes, and thereby plays an important role in regulating the response to growth factors, DNA damage, and ischemia. Plays a role in the regulation of cell survival, proliferation and cell death. Activates expression of p53/TP53 and TGFB1, and thereby helps prevent tumor formation. Required for normal progress through mitosis and normal proliferation of hepatocytes after partial hepatectomy. Mediates responses to ischemia and hypoxia; regulates the expression of proteins such as IL1B and CXCL2 that are involved in inflammatory processes and development of tissue damage after ischemia. Regulates biosynthesis of luteinizing hormone (LHB) in the pituitary. Regulates the amplitude of the expression rhythms of clock genes: BMAL1, PER2 and NR1D1 in the liver via the activation of PER1 (clock repressor) transcription. Regulates the rhythmic expression of core-clock gene BMAL1 in the suprachiasmatic nucleus (SCN). In Mus musculus (Mouse), this protein is Early growth response protein 1 (Egr1).